A 449-amino-acid polypeptide reads, in one-letter code: Methionine aminopeptidase 2 (449 aa).

The tract at residues 1-91 is disordered; the sequence is MAAQAAPELA…PRIPLTTLFP (91 aa). The span at 34–50 shows a compositional bias: acidic residues; the sequence is EEAENEGDSDDDRDDEQ. Over residues 61-75 the composition is skewed to basic residues; that stretch reads KKKKKKRPKKKKKTA. His199 is a binding site for substrate. Asp219, Asp230, and His299 together coordinate a divalent metal cation. His307 contacts substrate. A divalent metal cation is bound by residues Glu335 and Glu430.

It belongs to the peptidase M24A family. Methionine aminopeptidase eukaryotic type 2 subfamily. The cofactor is Co(2+). Zn(2+) serves as cofactor. Mn(2+) is required as a cofactor. Requires Fe(2+) as cofactor.

The protein localises to the cytoplasm. The catalysed reaction is Release of N-terminal amino acids, preferentially methionine, from peptides and arylamides.. Cotranslationally removes the N-terminal methionine from nascent proteins. The N-terminal methionine is often cleaved when the second residue in the primary sequence is small and uncharged (Met-Ala-, Cys, Gly, Pro, Ser, Thr, or Val). The protein is Methionine aminopeptidase 2 of Arthroderma benhamiae (strain ATCC MYA-4681 / CBS 112371) (Trichophyton mentagrophytes).